The sequence spans 249 residues: 5'-nucleotidase SurE (249 aa).

Residues D8, D9, S39, and N91 each contribute to the a divalent metal cation site.

It belongs to the SurE nucleotidase family. It depends on a divalent metal cation as a cofactor.

The protein resides in the cytoplasm. The catalysed reaction is a ribonucleoside 5'-phosphate + H2O = a ribonucleoside + phosphate. Nucleotidase that shows phosphatase activity on nucleoside 5'-monophosphates. The chain is 5'-nucleotidase SurE from Haemophilus influenzae (strain PittEE).